Here is a 186-residue protein sequence, read N- to C-terminus: Methylamine dehydrogenase light chain (186 aa).

The tat-type signal signal peptide spans 1 to 57 (MKKNTGFDSGIEKLARKTASKTGRRSFIGKLGGFLVGSALLPLLPVDRRGRMNEAHA). 6 cysteine pairs are disulfide-bonded: Cys78–Cys143, Cys84–Cys116, Cys91–Cys176, Cys93–Cys141, Cys101–Cys132, and Cys133–Cys164. At Trp112 the chain carries Tryptophylquinone. The tryptophan tryptophylquinone (Trp-Trp) cross-link spans 112 to 163 (WVASCFNPGDGQTYLIAYRDCCGKQTCGRCNCVNVQGELPVYRPEFNNDIVW).

This sequence belongs to the aromatic amine dehydrogenase light chain family. Heterotetramer of two light and two heavy chains. Tryptophan tryptophylquinone residue serves as cofactor. In terms of processing, predicted to be exported by the Tat system. The position of the signal peptide cleavage has not been experimentally proven. Tryptophan tryptophylquinone (TTQ) is formed by oxidation of the indole ring of a tryptophan to form tryptophylquinone followed by covalent cross-linking with another tryptophan residue.

The protein resides in the periplasm. It carries out the reaction 2 oxidized [amicyanin] + methylamine + H2O = 2 reduced [amicyanin] + formaldehyde + NH4(+) + 2 H(+). It participates in one-carbon metabolism; methylamine degradation; formaldehyde from methylamine: step 1/1. Its function is as follows. Methylamine dehydrogenase carries out the oxidation of methylamine. Electrons are passed from methylamine dehydrogenase to amicyanin. The sequence is that of Methylamine dehydrogenase light chain (mauA) from Methylobacillus flagellatus (strain ATCC 51484 / DSM 6875 / VKM B-1610 / KT).